The following is a 53-amino-acid chain: Large ribosomal subunit protein bL33A (53 aa).

It belongs to the bacterial ribosomal protein bL33 family.

This is Large ribosomal subunit protein bL33A (rpmG1) from Mycoplasma pneumoniae (strain ATCC 29342 / M129 / Subtype 1) (Mycoplasmoides pneumoniae).